The primary structure comprises 375 residues: CCN family member 1 (375 aa).

An N-terminal signal peptide occupies residues 1-22 (MGSAGARPALAAALLCLARLAL). The 72-residue stretch at 23-94 (GSPCPAVCQC…AATNGICRAQ (72 aa)) folds into the IGFBP N-terminal domain. 6 disulfides stabilise this stretch: Cys26–Cys50, Cys30–Cys52, Cys32–Cys53, Cys39–Cys56, Cys64–Cys78, and Cys70–Cys91. A VWFC domain is found at 98–164 (RPCEYNSKIY…GQCCEEWVCD (67 aa)). In terms of domain architecture, TSP type-1 spans 223-268 (KCIVQTTSWSQCSKTCGTGISTRVTNDNPDCKLIKETRICEVRPCG). A heparin-binding region spans residues 274-310 (SLKKGKKCTKTKKSPSPVRFTYAGCSSVKKYRPKYCG). 5 cysteine pairs are disulfide-bonded: Cys281–Cys318, Cys298–Cys332, Cys309–Cys348, Cys312–Cys350, and Cys317–Cys354. Residues 281-355 (CTKTKKSPSP…QSCRCNYNCP (75 aa)) form the CTCK domain.

This sequence belongs to the CCN family.

The protein resides in the secreted. Its function is as follows. Probable secreted regulatory protein. The polypeptide is CCN family member 1 (CCN1) (Gallus gallus (Chicken)).